The following is a 391-amino-acid chain: MAPDNDHFLDSPSPPLLEMRHHQSATENGGGCGEIVEVQGGHIVRSTGRKDRHSKVCTAKGPRDRRVRLSAPTAIQFYDVQDRLGFDRPSKAVDWLITKAKSAIDDLAQLPPWNPADTLRQHAAAAANAKPRKTKTLISPPPPQPEETEHHRIGEEEDNESSFLPASMDSDSIADTIKSFFPVASTQQSYHHQPPSRGNTQNQDLLRLSLQSFQNGPPFPNQTEPALFSGQSNNQLAFDSSTASWEQSHQSPEFGKIQRLVSWNNVGAAESAGSTGGFVFASPSSLHPVYSQSQLLSQRGPLQSINTPMIRAWFDPHHHHHHHQQSMTTDDLHHHHPYHIPPGIHQSAIPGIAFASSGEFSGFRIPARFQGEQEEHGGDNKPSSASSDSRH.

The tract at residues 1–34 (MAPDNDHFLDSPSPPLLEMRHHQSATENGGGCGE) is disordered. Positions 49 to 107 (RKDRHSKVCTAKGPRDRRVRLSAPTAIQFYDVQDRLGFDRPSKAVDWLITKAKSAIDDL) constitute a TCP domain. Disordered regions lie at residues 122–168 (HAAA…PASM), 317–345 (HHHH…PGIH), and 363–391 (FRIP…DSRH). Residues 381–391 (KPSSASSDSRH) are compositionally biased toward polar residues.

As to quaternary structure, interacts with SPL. Interacts with KIN10; KIN11 and FLZ3. As to expression, expressed in cotyledons, particularly in the vascular region, in leaves, roots, buds, flowers and immature siliques.

The protein resides in the nucleus. Plays a pivotal role in the control of morphogenesis of shoot organs by negatively regulating the expression of boundary-specific genes such as CUC genes, probably through the induction of miRNA (e.g. miR164). Participates in ovule development. The chain is Transcription factor TCP3 (TCP3) from Arabidopsis thaliana (Mouse-ear cress).